Consider the following 173-residue polypeptide: Adenine phosphoribosyltransferase (173 aa).

The protein belongs to the purine/pyrimidine phosphoribosyltransferase family. Homodimer.

It is found in the cytoplasm. It carries out the reaction AMP + diphosphate = 5-phospho-alpha-D-ribose 1-diphosphate + adenine. The protein operates within purine metabolism; AMP biosynthesis via salvage pathway; AMP from adenine: step 1/1. In terms of biological role, catalyzes a salvage reaction resulting in the formation of AMP, that is energically less costly than de novo synthesis. This is Adenine phosphoribosyltransferase from Macrococcus caseolyticus (strain JCSC5402) (Macrococcoides caseolyticum).